A 447-amino-acid polypeptide reads, in one-letter code: UDP-N-acetylmuramoylalanine--D-glutamate ligase (447 aa).

130–136 (GTSGKTT) provides a ligand contact to ATP.

It belongs to the MurCDEF family.

It is found in the cytoplasm. It carries out the reaction UDP-N-acetyl-alpha-D-muramoyl-L-alanine + D-glutamate + ATP = UDP-N-acetyl-alpha-D-muramoyl-L-alanyl-D-glutamate + ADP + phosphate + H(+). It participates in cell wall biogenesis; peptidoglycan biosynthesis. Functionally, cell wall formation. Catalyzes the addition of glutamate to the nucleotide precursor UDP-N-acetylmuramoyl-L-alanine (UMA). In Oleidesulfovibrio alaskensis (strain ATCC BAA-1058 / DSM 17464 / G20) (Desulfovibrio alaskensis), this protein is UDP-N-acetylmuramoylalanine--D-glutamate ligase.